A 381-amino-acid chain; its full sequence is Chaperone protein DnaJ (381 aa).

The region spanning 4-69 is the J domain; sequence DYYEILGVAR…EKRARYDQFG (66 aa). The CR-type zinc-finger motif lies at 139–221; the sequence is GGEKELRVTR…CGGSGLVRKT (83 aa). Residues cysteine 152, cysteine 155, cysteine 169, cysteine 172, cysteine 195, cysteine 198, cysteine 209, and cysteine 212 each contribute to the Zn(2+) site. CXXCXGXG motif repeat units follow at residues 152-159, 169-176, 195-202, and 209-216; these read CGHCHGNG, CPTCQGRG, CSTCRGEG, and CRECGGSG.

This sequence belongs to the DnaJ family. In terms of assembly, homodimer. It depends on Zn(2+) as a cofactor.

The protein resides in the cytoplasm. Participates actively in the response to hyperosmotic and heat shock by preventing the aggregation of stress-denatured proteins and by disaggregating proteins, also in an autonomous, DnaK-independent fashion. Unfolded proteins bind initially to DnaJ; upon interaction with the DnaJ-bound protein, DnaK hydrolyzes its bound ATP, resulting in the formation of a stable complex. GrpE releases ADP from DnaK; ATP binding to DnaK triggers the release of the substrate protein, thus completing the reaction cycle. Several rounds of ATP-dependent interactions between DnaJ, DnaK and GrpE are required for fully efficient folding. Also involved, together with DnaK and GrpE, in the DNA replication of plasmids through activation of initiation proteins. The sequence is that of Chaperone protein DnaJ from Carboxydothermus hydrogenoformans (strain ATCC BAA-161 / DSM 6008 / Z-2901).